We begin with the raw amino-acid sequence, 73 residues long: Large ribosomal subunit protein bL31 (73 aa).

Zn(2+) contacts are provided by cysteine 16, cysteine 18, cysteine 37, and cysteine 40.

Belongs to the bacterial ribosomal protein bL31 family. Type A subfamily. In terms of assembly, part of the 50S ribosomal subunit. The cofactor is Zn(2+).

Its function is as follows. Binds the 23S rRNA. The protein is Large ribosomal subunit protein bL31 of Blochmanniella floridana.